The chain runs to 231 residues: Phycobilisome rod-core linker polypeptide cpcG (231 aa).

The region spanning Ser-11–Lys-191 is the PBS-linker domain.

Belongs to the phycobilisome linker protein family. In terms of assembly, the phycobilisome is a hemidiscoidal structure that is composed of two distinct substructures: a core complex and a number of rods radiating from the core.

It localises to the plastid. The protein resides in the chloroplast. The protein localises to the chloroplast thylakoid membrane. Its function is as follows. Rod-core linker protein required for attachment of phycocyanin to allophycocyanin in cores of phycobilisomes. Linker polypeptides determine the state of aggregation and the location of the disk-shaped phycobiliprotein units within the phycobilisome and modulate their spectroscopic properties in order to mediate a directed and optimal energy transfer. This is Phycobilisome rod-core linker polypeptide cpcG (cpcG) from Porphyra purpurea (Red seaweed).